Reading from the N-terminus, the 263-residue chain is Endonuclease 8 (263 aa).

Residue Pro-2 is the Schiff-base intermediate with DNA of the active site. Catalysis depends on Glu-3, which acts as the Proton donor. The active-site Proton donor; for beta-elimination activity is the Lys-53. 3 residues coordinate DNA: Gln-70, Arg-125, and Asn-169. The segment at 229–263 (KVFHRDGEACERCGGIIEKTTLSSRPFYWCPHCQK) adopts an FPG-type zinc-finger fold. Arg-253 (proton donor; for delta-elimination activity) is an active-site residue.

It belongs to the FPG family. Zn(2+) is required as a cofactor.

It catalyses the reaction 2'-deoxyribonucleotide-(2'-deoxyribose 5'-phosphate)-2'-deoxyribonucleotide-DNA = a 3'-end 2'-deoxyribonucleotide-(2,3-dehydro-2,3-deoxyribose 5'-phosphate)-DNA + a 5'-end 5'-phospho-2'-deoxyribonucleoside-DNA + H(+). In terms of biological role, involved in base excision repair of DNA damaged by oxidation or by mutagenic agents. Acts as a DNA glycosylase that recognizes and removes damaged bases. Has a preference for oxidized pyrimidines, such as thymine glycol, 5,6-dihydrouracil and 5,6-dihydrothymine. Has AP (apurinic/apyrimidinic) lyase activity and introduces nicks in the DNA strand. Cleaves the DNA backbone by beta-delta elimination to generate a single-strand break at the site of the removed base with both 3'- and 5'-phosphates. This chain is Endonuclease 8, found in Salmonella dublin (strain CT_02021853).